A 739-amino-acid polypeptide reads, in one-letter code: Protein kinase C (739 aa).

The C2 domain maps to 1–117 (MFTGKLQIKV…SETAVQDLWV (117 aa)). 2 consecutive Phorbol-ester/DAG-type zinc fingers follow at residues 176-226 (GHKF…VSKC) and 251-301 (PHRF…ANTC). Positions 408-665 (FNFIKVLGKG…ENEIRKHPFF (258 aa)) constitute a Protein kinase domain. ATP contacts are provided by residues 414–422 (LGKGSFGKV) and K437. D532 serves as the catalytic Proton acceptor. In terms of domain architecture, AGC-kinase C-terminal spans 666-737 (AKLDWKELEK…VNPKFGPERK (72 aa)).

This sequence belongs to the protein kinase superfamily. AGC Ser/Thr protein kinase family. PKC subfamily.

It catalyses the reaction L-seryl-[protein] + ATP = O-phospho-L-seryl-[protein] + ADP + H(+). The catalysed reaction is L-threonyl-[protein] + ATP = O-phospho-L-threonyl-[protein] + ADP + H(+). Functionally, PKC is activated by diacylglycerol which in turn phosphorylates a range of cellular proteins. PKC also serves as the receptor for phorbol esters, a class of tumor promoters. The chain is Protein kinase C (Pkc98E) from Drosophila melanogaster (Fruit fly).